The chain runs to 243 residues: 6-carboxyhexanoate--CoA ligase (243 aa).

It belongs to the BioW family. As to quaternary structure, homodimer. The cofactor is Mg(2+).

It catalyses the reaction heptanedioate + ATP + CoA = 6-carboxyhexanoyl-CoA + AMP + diphosphate. Its pathway is metabolic intermediate metabolism; pimeloyl-CoA biosynthesis; pimeloyl-CoA from pimelate: step 1/1. Functionally, catalyzes the transformation of pimelate into pimeloyl-CoA with concomitant hydrolysis of ATP to AMP. This is 6-carboxyhexanoate--CoA ligase from Corynebacterium pseudotuberculosis (strain FRC41).